A 95-amino-acid polypeptide reads, in one-letter code: MAAARLCLSLLLLSTCVALLLQPLLGAQGAPLEPVYPGDNATPEQMAQYAADLRRYINMLTRPRYGKRHKEDTLAFSEWGSPHAAVPRELSPLDL.

The first 29 residues, 1–29, serve as a signal peptide directing secretion; it reads MAAARLCLSLLLLSTCVALLLQPLLGAQG. A Tyrosine amide modification is found at Tyr-65. Positions 89 to 95 are excised as a propeptide; that stretch reads ELSPLDL.

This sequence belongs to the NPY family.

It localises to the secreted. Functionally, hormone secreted by pancreatic cells that acts as a regulator of pancreatic and gastrointestinal functions probably by signaling through the G protein-coupled receptor NPY4R2. This chain is Pancreatic polypeptide prohormone, found in Homo sapiens (Human).